Reading from the N-terminus, the 715-residue chain is Methylmalonyl-CoA mutase large subunit (715 aa).

(R)-methylmalonyl-CoA-binding residues include Y70, M73, R77, T80, R82, Y84, and S109. Cob(II)alamin-binding residues include F112 and A134. Residues T190 and Q192 each contribute to the (R)-methylmalonyl-CoA site. Residues V201 and R202 each coordinate cob(II)alamin. 4 residues coordinate (R)-methylmalonyl-CoA: R202, H239, R278, and S280. The cob(II)alamin site is built by G328, E365, A368, G599, H600, D601, R602, S645, L647, G676, and T699. Positions 587–715 (QPRIMIAKMG…AKVLEILLEE (129 aa)) constitute a B12-binding domain.

It belongs to the methylmalonyl-CoA mutase family. In terms of assembly, heterodimer of an alpha and a beta chain. Adenosylcob(III)alamin is required as a cofactor.

It carries out the reaction (R)-methylmalonyl-CoA = succinyl-CoA. Catalyzes the isomerization of succinyl-CoA to methylmalonyl-CoA during synthesis of propionate from tricarboxylic acid-cycle intermediates. This Porphyromonas gingivalis (strain ATCC BAA-308 / W83) protein is Methylmalonyl-CoA mutase large subunit (mutB).